A 79-amino-acid polypeptide reads, in one-letter code: Small ribosomal subunit protein bS21A (79 aa).

The disordered stretch occupies residues 57–79 (LARKKLQREGLLPAPKKVLRPTR).

Belongs to the bacterial ribosomal protein bS21 family.

This is Small ribosomal subunit protein bS21A from Rhizobium johnstonii (strain DSM 114642 / LMG 32736 / 3841) (Rhizobium leguminosarum bv. viciae).